The following is an 836-amino-acid chain: Protein translocase subunit SecA (836 aa).

Residues Gln85, 103–107, and Asp492 each bind ATP; that span reads GEGKT. Zn(2+) contacts are provided by Cys820, Cys822, Cys831, and Cys832.

This sequence belongs to the SecA family. In terms of assembly, monomer and homodimer. Part of the essential Sec protein translocation apparatus which comprises SecA, SecYEG and auxiliary proteins SecDF. Other proteins may also be involved. Zn(2+) serves as cofactor.

It localises to the cell membrane. Its subcellular location is the cytoplasm. It catalyses the reaction ATP + H2O + cellular proteinSide 1 = ADP + phosphate + cellular proteinSide 2.. In terms of biological role, part of the Sec protein translocase complex. Interacts with the SecYEG preprotein conducting channel. Has a central role in coupling the hydrolysis of ATP to the transfer of proteins into and across the cell membrane, serving as an ATP-driven molecular motor driving the stepwise translocation of polypeptide chains across the membrane. The protein is Protein translocase subunit SecA of Clostridium botulinum (strain Alaska E43 / Type E3).